We begin with the raw amino-acid sequence, 232 residues long: Sugar fermentation stimulation protein homolog (232 aa).

It belongs to the SfsA family.

This Shouchella clausii (strain KSM-K16) (Alkalihalobacillus clausii) protein is Sugar fermentation stimulation protein homolog.